A 486-amino-acid polypeptide reads, in one-letter code: Transcription enhancer factor-like protein egl-44 (486 aa).

Low complexity predominate over residues 47–57 (GTTTPTTTSGG). A disordered region spans residues 47-87 (GTTTPTTTSGGQMMTLSPPAGDGPGSAGSMAPESTSSLSDL). A DNA-binding region (TEA) is located at residues 88 to 164 (SGDAEGVWSI…QVLARKKLRD (77 aa)). The disordered stretch occupies residues 165–188 (EQAKKKGDIPSLLQQASPPGGVKS).

As to quaternary structure, interacts (via N-terminus) with egl-46 (via C-terminus); the interaction is direct; the interaction may regulate transcription. Interacts with yap-1 (via WW domain); the interaction may regulate transcription. In terms of tissue distribution, expressed in HSN neurons in embryos and in the FLP neurons from the L1 stage through to adults. Not expressed in touch cells. Also expressed in larval hypodermis, intestine, pharyngeal muscle and other neurons. In adults expression is lost from some neurons, is weaker in the hypodermis but remains in the intestine. Expressed in HOB neuron, ray neurons RnA and RnB, and the ray structural cell, Rnst; rays are male-specific genital sensilla (simple sense organs).

The protein resides in the nucleus. Transcription factor. Binds to DNA sequence motif 5'-CATNNNNAAATGCAT-3' as a heterodimer with egl-46. Represses expression of genes involved in differentiation of touch receptor neurons (TRN), probably acting as a heterodimer with egl-46, perhaps by occupying similar cis-regulatory elements as an unc-86/mec-3 heterodimer. Plays a role in cell fate specification of neurons, including the hook neuron HOB, and touch receptor neurons. Involved in male mating behavior, acting in concert with egl-46, via modulation of expression of polycystins lov-1 and pkd-2, homeodomain protein ceh-26, and neuropeptide-like protein nlp-8. Acts upstream of egl-46 to prevent touch cell differentiation in FLP neurons. Plays a role in neuron differentiation by repressing the expression of zag-1 in FLP neurons, probably acting as a heterodimer with egl-46; because zag-1 represses expression of egl-46 and egl-44, together these proteins form a bistable, negative-feedback loop that regulates the choice between neuronal fates. Also promotes HSN neuron development. In association with egl-46, regulates cell cycle exit in the neuronal Q cell lineage. Plays a role in specifying commissural dendrites of the PVD nociceptive neurons, acting in concert with egl-46. May be involved in thermal stress response downstream of yap-1. In Caenorhabditis elegans, this protein is Transcription enhancer factor-like protein egl-44 (egl-44).